A 384-amino-acid chain; its full sequence is Protein Brevis radix-like 4 (384 aa).

Disordered stretches follow at residues 1-35 (MLTC…SQLK) and 50-78 (PCTA…SDFE). Residues 150–205 (KEWVAQVEPGVLITFVSLPGGGNDLKRIRFSRDMFNKLQAQRWWADNYDKVMELYN) form the BRX 1 domain. 2 disordered regions span residues 214–270 (FPLP…DHNS) and 304–325 (SIRS…SNAS). Basic and acidic residues predominate over residues 221-235 (RSEDENAKVEYHPED). The span at 260-270 (YSSSDSLDHNS) shows a compositional bias: polar residues. Over residues 309 to 318 (SSRDADRSEE) the composition is skewed to basic and acidic residues. The BRX 2 domain maps to 329-384 (NEWVEQDEPGVYITIKVLPGGKRELRRVRFSRERFGEMHARLWWEENRARIHEQYL).

This sequence belongs to the BRX family. As to expression, expressed in roots.

The protein resides in the nucleus. The sequence is that of Protein Brevis radix-like 4 (BRXL4) from Arabidopsis thaliana (Mouse-ear cress).